A 230-amino-acid polypeptide reads, in one-letter code: Urease accessory protein UreG (230 aa).

Positions 1-31 are disordered; sequence MPPHFLSADSTGQPHRHADRPKRVRTPGEPL. A compositionally biased stretch (basic residues) spans 14 to 25; sequence PHRHADRPKRVR. 37-44 is a binding site for GTP; it reads GPVGSGKT.

This sequence belongs to the SIMIBI class G3E GTPase family. UreG subfamily. As to quaternary structure, homodimer. UreD, UreF and UreG form a complex that acts as a GTP-hydrolysis-dependent molecular chaperone, activating the urease apoprotein by helping to assemble the nickel containing metallocenter of UreC. The UreE protein probably delivers the nickel.

It is found in the cytoplasm. Its function is as follows. Facilitates the functional incorporation of the urease nickel metallocenter. This process requires GTP hydrolysis, probably effectuated by UreG. The polypeptide is Urease accessory protein UreG (Mycobacterium sp. (strain JLS)).